The sequence spans 324 residues: Glyoxylate/hydroxypyruvate reductase B (324 aa).

Residues R237 and E266 contribute to the active site. The active-site Proton donor is H285.

It belongs to the D-isomer specific 2-hydroxyacid dehydrogenase family. GhrB subfamily. In terms of assembly, homodimer.

The protein resides in the cytoplasm. The catalysed reaction is glycolate + NADP(+) = glyoxylate + NADPH + H(+). It carries out the reaction (R)-glycerate + NAD(+) = 3-hydroxypyruvate + NADH + H(+). The enzyme catalyses (R)-glycerate + NADP(+) = 3-hydroxypyruvate + NADPH + H(+). In terms of biological role, catalyzes the NADPH-dependent reduction of glyoxylate and hydroxypyruvate into glycolate and glycerate, respectively. This is Glyoxylate/hydroxypyruvate reductase B from Salmonella typhi.